The following is a 704-amino-acid chain: Meprin A subunit beta (704 aa).

The signal sequence occupies residues 1 to 20 (MDARHQPWFLVFATFLLVSG). Positions 21–64 (LPAPEKFVKDIDGGIDQDIFDINQGLGLDLFEGDIKLEANGKNS) are excised as a propeptide. The Extracellular portion of the chain corresponds to 21–654 (LPAPEKFVKD…RCEKRGSTRD (634 aa)). Residues 63 to 257 (NSIIGDHKRW…LKLNQLYNCT (195 aa)) form the Peptidase M12A domain. 3 cysteine pairs are disulfide-bonded: Cys104/Cys256, Cys125/Cys145, and Cys266/Cys428. His153 provides a ligand contact to Zn(2+). Glu154 is a catalytic residue. Zn(2+) is bound by residues His157 and His163. 9 N-linked (GlcNAc...) asparagine glycosylation sites follow: Asn193, Asn219, Asn255, Asn316, Asn422, Asn437, Asn529, Asn548, and Asn593. Residues 261–430 (SFMDSCDFEL…INLSETRCPH (170 aa)) form the MAM domain. The MATH domain occupies 431–586 (HIWHIQNFTQ…GDDIYILLTV (156 aa)). In terms of domain architecture, EGF-like spans 607 to 647 (VHNACSEVVCQNGGICVVQDGRAECKCPAGEDWWYMGKRCE). Intrachain disulfides connect Cys611–Cys622, Cys616–Cys631, and Cys633–Cys646. A helical transmembrane segment spans residues 655 to 678 (TVIIAVSSTVTVFAVMLIITLVSV). Residues 679–704 (YCTRRKYRKKARANTAAMTLENQHAF) are Cytoplasmic-facing. Residue Thr697 is modified to Phosphothreonine.

In terms of assembly, homotetramer consisting of disulfide-linked beta subunits, or heterotetramer of two alpha and two beta subunits formed by non-covalent association of two disulfide-linked heterodimers. Interacts with MBL2 through its carbohydrate moiety. This interaction may inhibit its catalytic activity. Interacts with TSPAN8. Requires Zn(2+) as cofactor. Proteolytically activated by trypsin in the intestinal lumen and kallikrein-related peptidases in other tissues. Post-translationally, N-glycosylated; contains high mannose and/or complex biantennary structures. In terms of processing, phosphorylated by PKC at multiple sites of its cytoplasmic part. Phosphorylation dcreases activity at the cell surface, leading to diminished substrate cleavage. In terms of tissue distribution, isoform 1 is expressed in kidney, intestinal brush borders, and salivary ducts. Isoform 2 has been found in carcinoma cells.

It is found in the cell membrane. The protein resides in the secreted. The enzyme catalyses Hydrolysis of proteins, including azocasein, and peptides. Hydrolysis of 5-His-|-Leu-6, 6-Leu-|-Cys-7, 14-Ala-|-Leu-15 and 19-Cys-|-Gly-20 bonds in insulin B chain.. Strongly inhibited by fetuin-A/AHSG. Inhibited by cysteine and by the metal ion chelators EDTA and 1,10-phenanthroline. Not inhibited by 3,4-dichloroisocourmarin, soybean trypsin inhibitor, or the cysteine proteinase inhibitors iodoacetic acid and E-64. Membrane metallopeptidase that sheds many membrane-bound proteins. Exhibits a strong preference for acidic amino acids at the P1' position. Known substrates include: FGF19, VGFA, IL1B, IL18, procollagen I and III, E-cadherin, KLK7, gastrin, ADAM10, tenascin-C. The presence of several pro-inflammatory cytokine among substrates implicate MEP1B in inflammation. It is also involved in tissue remodeling due to its capability to degrade extracellular matrix components. This chain is Meprin A subunit beta (Mep1b), found in Mus musculus (Mouse).